The following is an 88-amino-acid chain: UPF0237 protein SMU_72 (88 aa).

The 74-residue stretch at 4–77 folds into the ACT domain; that stretch reads IITVVGKDRT…ETLNVKINIQ (74 aa).

Belongs to the UPF0237 family. In terms of assembly, homodimer.

In Streptococcus mutans serotype c (strain ATCC 700610 / UA159), this protein is UPF0237 protein SMU_72.